The primary structure comprises 1881 residues: Kinesin-like protein KIF26A (1881 aa).

Disordered regions lie at residues 20–66, 145–193, and 309–330; these read PARE…AGGG, PASH…PPGP, and ASKR…STYP. Ser30 carries the post-translational modification Phosphoserine. The Kinesin motor domain occupies 364 to 718; sequence KVKVMLRIWP…VQLAARIHRL (355 aa). ATP is bound at residue 462-469; the sequence is GHMSLGKS. 8 disordered regions span residues 718 to 778, 794 to 827, 846 to 982, 1078 to 1104, 1118 to 1266, 1328 to 1425, 1442 to 1633, and 1652 to 1698; these read LRRK…SSEQ, SDRE…RDAD, GSEA…QAAL, YTSQ…GSPA, LSES…PRLP, SGSL…PYRP, SKVR…SGEL, and YESM…TGLQ. The segment covering 742–751 has biased composition (basic residues); sequence RRPPHLRPFH. Positions 818–827 are enriched in basic and acidic residues; that stretch reads RPSEGPRDAD. Over residues 905–915 the composition is skewed to polar residues; the sequence is SDPSKTGTQSE. A compositionally biased stretch (pro residues) spans 940 to 950; it reads LPSPAPPPPRQ. The span at 1084 to 1095 shows a compositional bias: low complexity; that stretch reads EGPGDPGEFPEG. The segment covering 1151-1162 has biased composition (basic and acidic residues); the sequence is EESKVRSSECGR. Ser1257 carries the phosphoserine modification. The segment covering 1328-1353 has biased composition (low complexity); that stretch reads SGSLKTTSGSKKSVSPKGAFFPRPSG. Positions 1366 to 1378 are enriched in polar residues; the sequence is LEQSTALTPTQAL. The span at 1390 to 1399 shows a compositional bias: basic and acidic residues; that stretch reads RGEEEARPSG. Over residues 1400–1412 the composition is skewed to polar residues; the sequence is RSDSSVPKATSSL. Composition is skewed to low complexity over residues 1477 to 1489, 1524 to 1537, and 1575 to 1587; these read PAKG…PPAG, PGPR…PGIG, and WGST…NDSG. Residues 1616-1629 show a composition bias toward polar residues; that stretch reads RYSSGHGSDNSSVL. Ser1654 carries the post-translational modification Phosphoserine. Over residues 1664–1675 the composition is skewed to low complexity; sequence SASSAPDSMSES. Basic residues predominate over residues 1685–1698; sequence RSLKSPKKRATGLQ. A coiled-coil region spans residues 1780 to 1812; that stretch reads LRLAERRQQRLQEVQAKRDHLCEELAETQGRLM.

Belongs to the TRAFAC class myosin-kinesin ATPase superfamily. Kinesin family. KIF26 subfamily. As to quaternary structure, interacts with GRB2 (via SH2 domain). As to expression, expressed in several neuronal populations.

The protein resides in the cytoplasm. It is found in the cytoskeleton. Functionally, atypical kinesin that plays a key role in enteric neuron development. Acts by repressing a cell growth signaling pathway in the enteric nervous system development, possibly via its interaction with GRB2 that prevents GRB2-binding to SHC, thereby attenating the GDNF-Ret signaling. Binds to microtubules but lacks microtubule-based motility due to the absence of ATPase activity. Plays a critical role in cerebral cortical development. It probably acts as a microtubule stabilizer that regulates neurite growth and radial migration of cortical excitatory neurons. The chain is Kinesin-like protein KIF26A (Kif26a) from Mus musculus (Mouse).